The following is a 65-amino-acid chain: Large ribosomal subunit protein bL28 (65 aa).

Residues 1–21 (MAKKDQLTLRGPLYGNNRSHS) are disordered.

Belongs to the bacterial ribosomal protein bL28 family.

This Mycoplasma pneumoniae (strain ATCC 29342 / M129 / Subtype 1) (Mycoplasmoides pneumoniae) protein is Large ribosomal subunit protein bL28.